Consider the following 101-residue polypeptide: Thylakoid-associated protein slr0729 (101 aa).

Its subcellular location is the cellular thylakoid membrane. This chain is Thylakoid-associated protein slr0729, found in Synechocystis sp. (strain ATCC 27184 / PCC 6803 / Kazusa).